The chain runs to 284 residues: Tropomyosin (284 aa).

Positions 1 to 284 (MDAIKKKMQA…DMTFTELIGN (284 aa)) form a coiled coil.

This sequence belongs to the tropomyosin family. As to quaternary structure, homodimer.

Functionally, tropomyosin, in association with the troponin complex, plays a central role in the calcium dependent regulation of muscle contraction. In Blattella germanica (German cockroach), this protein is Tropomyosin.